The sequence spans 375 residues: Succinyl-diaminopimelate desuccinylase (375 aa).

H66 provides a ligand contact to Zn(2+). D68 is an active-site residue. D99 is a binding site for Zn(2+). Catalysis depends on E133, which acts as the Proton acceptor. 3 residues coordinate Zn(2+): E134, E162, and H348.

It belongs to the peptidase M20A family. DapE subfamily. Homodimer. Zn(2+) serves as cofactor. The cofactor is Co(2+).

The catalysed reaction is N-succinyl-(2S,6S)-2,6-diaminopimelate + H2O = (2S,6S)-2,6-diaminopimelate + succinate. The protein operates within amino-acid biosynthesis; L-lysine biosynthesis via DAP pathway; LL-2,6-diaminopimelate from (S)-tetrahydrodipicolinate (succinylase route): step 3/3. Its function is as follows. Catalyzes the hydrolysis of N-succinyl-L,L-diaminopimelic acid (SDAP), forming succinate and LL-2,6-diaminopimelate (DAP), an intermediate involved in the bacterial biosynthesis of lysine and meso-diaminopimelic acid, an essential component of bacterial cell walls. The protein is Succinyl-diaminopimelate desuccinylase of Buchnera aphidicola subsp. Acyrthosiphon pisum (strain 5A).